The sequence spans 974 residues: Leucine-rich repeat receptor-like kinase protein SUNN (974 aa).

The N-terminal stretch at 1-20 is a signal peptide; it reads MKNITCYLLLLCMLFTTCYS. Asn-75, Asn-104, Asn-123, and Asn-136 each carry an N-linked (GlcNAc...) asparagine glycan. LRR repeat units follow at residues 92 to 116, 117 to 141, 143 to 165, 166 to 188, 189 to 213, 238 to 262, 263 to 286, 288 to 309, 310 to 334, 335 to 358, 360 to 382, 383 to 406, 407 to 430, 431 to 454, 456 to 477, 478 to 501, 503 to 525, 527 to 549, 550 to 573, and 574 to 598; these read LNML…LSKL, TSLR…TFGM, KLEA…IVSL, MKLK…SYSE, FQKL…LSKL, IKSL…LGNL, ENLD…LSSM, SLMS…TFSK, LKNL…IGDL, PNLE…LGSN, KFIY…LCKS, KKLK…IGPC, KSLE…IFQL, PSVQ…ISGN, LGNL…MKNL, RSLQ…VFAL, VLTR…VTQC, SLTA…MKNL, KVLS…IRFM, and TSLT…QFLV. Asn-250 and Asn-274 each carry an N-linked (GlcNAc...) asparagine glycan. Residues Asn-312 and Asn-346 are each glycosylated (N-linked (GlcNAc...) asparagine). 2 N-linked (GlcNAc...) asparagine glycosylation sites follow: Asn-508 and Asn-513. Asn-556 and Asn-585 each carry an N-linked (GlcNAc...) asparagine glycan. Residues 635–655 form a helical membrane-spanning segment; that stretch reads VVIAIVFATAVLMVIVTLHMM. The region spanning 685-972 is the Protein kinase domain; the sequence is LKEENIIGKG…PPHSTSHNLI (288 aa). ATP-binding positions include 691 to 699 and Lys-713; that span reads IGKGGAGIV. Asp-810 functions as the Proton acceptor in the catalytic mechanism.

Belongs to the protein kinase superfamily. Ser/Thr protein kinase family. As to expression, expressed in roots and shoots. Expressed in the vasculature of leaves, petioles, stems and roots.

Its subcellular location is the cell membrane. The catalysed reaction is L-seryl-[protein] + ATP = O-phospho-L-seryl-[protein] + ADP + H(+). The enzyme catalyses L-threonyl-[protein] + ATP = O-phospho-L-threonyl-[protein] + ADP + H(+). In terms of biological role, LRR receptor kinase involved in the regulation of root growth and root nodule organogenesis. Involved in long distance nodulation signaling events. Involved in the autoregulation of nodulation (AON), a long distance systemic signaling from root to shoot and back again, which allows legumes to limit the number of root nodules formed based on available nitrogen and previous rhizobial colonization. Acts from shoot to root to control AON. Interacts with CLE12 and CLE13 signaling to control nodule numbers. Required for the modulation of shoot-to-root auxin transport in response to altered nitrogen tissue concentrations and in the absence of rhizobia. Shoot-to-root auxin transport influences lateral root density and length. Involved in the regulation of root colonization by arbuscular mycorrhizal (AM) fungi. Interacts with CLE33 and CL53 signaling to repress strigolactone biosynthetic genes and strigolactone content in the roots, and consequently reduces the promotion of further colonization by AM fungi. In Medicago truncatula (Barrel medic), this protein is Leucine-rich repeat receptor-like kinase protein SUNN.